Here is a 341-residue protein sequence, read N- to C-terminus: Arfaptin-2 (341 aa).

Residues 46 to 85 (NETSIVSGGYGGSGDGLIPTGSGRHPSHSTTPSGPGDEVA) are disordered. Ser72 is modified (phosphoserine). Thr76 bears the Phosphothreonine mark. Residues 121-321 (TVDLELELQI…NQKQLEQTLQ (201 aa)) form the AH domain.

As to quaternary structure, forms homodimers or heterodimers with ARFIP1. Interacts with RAC1. Specifically binds to GTP-bound ARF1 and ARF6, but binds to RAC1.GTP and RAC1.GDP with similar affinities. Interacts with ARL1. Interacts (via N-terminus) with IKBKB and IKBKG; these interactions inhibit activation of NF-kappa-B.

It is found in the golgi apparatus. The protein localises to the trans-Golgi network membrane. Its function is as follows. Plays a role in constitutive metalloproteinase (MMP) secretion from the trans Golgi network. May have important functions during vesicle biogenesis at certain cargo subdomains, which could be predominantly utilized by secreted MMPs, such as MMP7 and MMP2. Also involved in autophagy by regulating the starvation-dependent trafficking of ATG9A vesicles which deliver the phosphatidylinositol 4-kinase beta (PI4KB) to the autophagosome initiation site. Involved in phagophore growth during mitophagy by regulating ATG9A trafficking to mitochondria. In addition, plays a role in NF-kappa-B inhibition by interacting with IKBKB and IKBKG. In Homo sapiens (Human), this protein is Arfaptin-2.